The sequence spans 464 residues: Protein btn-1 (464 aa).

The N-terminal stretch at methionine 1 to alanine 22 is a signal peptide. The next 10 membrane-spanning stretches (helical) occupy residues alanine 38–leucine 58, valine 73–isoleucine 93, isoleucine 102–serine 122, leucine 129–leucine 149, glycine 167–valine 187, serine 190–proline 210, serine 288–asparagine 308, proline 332–isoleucine 352, isoleucine 354–histidine 374, and leucine 376–leucine 396.

It belongs to the battenin family.

The protein localises to the vacuole membrane. Involved in vacuolar transport and vacuole pH homeostasis. Also required for cytokinesis. This chain is Protein btn-1 (cln3), found in Neurospora crassa (strain ATCC 24698 / 74-OR23-1A / CBS 708.71 / DSM 1257 / FGSC 987).